The chain runs to 464 residues: Glycine receptor subunit alpha-3 (464 aa).

Positions 1-33 (MAHVRHFRTLVSGFYFWEAALLLSLVATKETDS) are cleaved as a signal peptide. Topologically, residues 34-255 (ARSRSAPMSP…RFHLERQMGY (222 aa)) are extracellular. Asn71 is a glycosylation site (N-linked (GlcNAc...) asparagine). Cys171 and Cys185 are oxidised to a cystine. Residues Glu225 and Asp227 each contribute to the Zn(2+) site. Residues Cys231 and Cys242 are joined by a disulfide bond. 235–240 (YNTGKF) contacts strychnine. Position 248 (His248) interacts with Zn(2+). A helical membrane pass occupies residues 256 to 277 (YLIQMYIPSLLIVILSWVSFWI). Residues 278-282 (NMDAA) are Cytoplasmic-facing. A helical membrane pass occupies residues 283–303 (PARVALGITTVLTMTTQSSGS). Residues 304-314 (RASLPKVSYVK) are Extracellular-facing. The helical transmembrane segment at 315–335 (AIDIWMAVCLLFVFSALLEYA) threads the bilayer. At 336 to 430 (AVNFVSRQHK…FIDRAKKIDT (95 aa)) the chain is on the cytoplasmic side. Phosphoserine occurs at positions 370 and 379. A helical membrane pass occupies residues 431-451 (ISRACFPLAFLIFNIFYWVIY). Residues 452 to 464 (KILRHEDIHQQQD) are Extracellular-facing.

The protein belongs to the ligand-gated ion channel (TC 1.A.9) family. Glycine receptor (TC 1.A.9.3) subfamily. GLRA3 sub-subfamily. Homopentamer (in vitro). Heteropentamer composed of GLRA3 and GLRB. Both homopentamers and heteropentamers form functional ion channels, but their characteristics are subtly different. Post-translationally, phosphorylated by PKA; this causes down-regulation of channel activity. In terms of tissue distribution, widely distributed throughout the central nervous system.

It is found in the postsynaptic cell membrane. It localises to the perikaryon. The protein localises to the cell projection. The protein resides in the dendrite. Its subcellular location is the synapse. It is found in the cell membrane. The catalysed reaction is chloride(in) = chloride(out). Its function is as follows. Glycine receptors are ligand-gated chloride channels. Channel opening is triggered by extracellular glycine. Channel characteristics depend on the subunit composition; heteropentameric channels display faster channel closure. Plays an important role in the down-regulation of neuronal excitability. Contributes to the generation of inhibitory postsynaptic currents. Contributes to increased pain perception in response to increased prostaglandin E2 levels. Plays a role in cellular responses to ethanol. In Homo sapiens (Human), this protein is Glycine receptor subunit alpha-3 (GLRA3).